A 487-amino-acid chain; its full sequence is Acetyl-coenzyme A carboxylase carboxyl transferase subunit beta, chloroplastic (487 aa).

Residues leucine 223 to lysine 487 enclose the CoA carboxyltransferase N-terminal domain. Positions 227, 230, 243, and 246 each coordinate Zn(2+). The segment at cysteine 227–cysteine 246 adopts a C4-type zinc-finger fold.

Belongs to the AccD/PCCB family. In terms of assembly, acetyl-CoA carboxylase is a heterohexamer composed of biotin carboxyl carrier protein, biotin carboxylase and 2 subunits each of ACCase subunit alpha and ACCase plastid-coded subunit beta (accD). It depends on Zn(2+) as a cofactor.

The protein localises to the plastid. Its subcellular location is the chloroplast stroma. It carries out the reaction N(6)-carboxybiotinyl-L-lysyl-[protein] + acetyl-CoA = N(6)-biotinyl-L-lysyl-[protein] + malonyl-CoA. It participates in lipid metabolism; malonyl-CoA biosynthesis; malonyl-CoA from acetyl-CoA: step 1/1. Its function is as follows. Component of the acetyl coenzyme A carboxylase (ACC) complex. Biotin carboxylase (BC) catalyzes the carboxylation of biotin on its carrier protein (BCCP) and then the CO(2) group is transferred by the transcarboxylase to acetyl-CoA to form malonyl-CoA. The protein is Acetyl-coenzyme A carboxylase carboxyl transferase subunit beta, chloroplastic of Nasturtium officinale (Watercress).